The following is a 201-amino-acid chain: Putative ankyrin repeat protein YahD (201 aa).

ANK repeat units follow at residues 5–34 (NLPA…DINT), 38–67 (QGKT…DINK), 71–100 (TCLN…DLNC), 104–134 (FGGV…NVNQ), 138–172 (VGWT…SPHL), and 176–201 (YGKT…AAGA).

The polypeptide is Putative ankyrin repeat protein YahD (yahD) (Escherichia coli (strain K12)).